A 138-amino-acid chain; its full sequence is Putative membrane protein insertion efficiency factor (138 aa).

The interval 71-138 (YDPVPGTPEA…GTPSHTRGEN (68 aa)) is disordered. Residues 81–113 (RQWRELHPETARSKNEPIHDLTDDNPRDHEPAL) show a composition bias toward basic and acidic residues. Residues 123-138 (PGSTHTGTPSHTRGEN) are compositionally biased toward polar residues.

This sequence belongs to the UPF0161 family.

It is found in the cell membrane. Its function is as follows. Could be involved in insertion of integral membrane proteins into the membrane. The sequence is that of Putative membrane protein insertion efficiency factor from Cutibacterium acnes (strain DSM 16379 / KPA171202) (Propionibacterium acnes).